Consider the following 74-residue polypeptide: Cecropin-P2 (74 aa).

An N-terminal signal peptide occupies residues 1 to 13; that stretch reads MIFIYLLVQTAES. A propeptide spans 45–74 (removed in mature form); the sequence is RRRFVVQQDTISPRLEVDERFLPNSVQEQI.

Belongs to the cecropin family. As to expression, expressed in the body wall, intestine, uterus and ovary.

Its subcellular location is the secreted. Its function is as follows. Has antibacterial activity against several Gram-positive and Gram-negative bacteria. Is weakly active against yeasts. Acts by a nonpore mechanism. This chain is Cecropin-P2 (ASCEC-2), found in Ascaris suum (Pig roundworm).